The chain runs to 431 residues: Adenylosuccinate synthetase (431 aa).

Residues 12–18 and 40–42 each bind GTP; these read GDEGKGK and GHT. Asp13 acts as the Proton acceptor in catalysis. Mg(2+)-binding residues include Asp13 and Gly40. Residues 13–16, 38–41, Thr128, Arg142, Gln223, Thr238, and Arg301 contribute to the IMP site; these read DEGK and NAGH. The Proton donor role is filled by His41. A substrate-binding site is contributed by 297 to 303; it reads TVTGRPR. GTP contacts are provided by residues Arg303, 329–331, and 411–413; these read SID and SVG.

Belongs to the adenylosuccinate synthetase family. Homodimer. The cofactor is Mg(2+).

It localises to the cytoplasm. It carries out the reaction IMP + L-aspartate + GTP = N(6)-(1,2-dicarboxyethyl)-AMP + GDP + phosphate + 2 H(+). It participates in purine metabolism; AMP biosynthesis via de novo pathway; AMP from IMP: step 1/2. Plays an important role in the de novo pathway of purine nucleotide biosynthesis. Catalyzes the first committed step in the biosynthesis of AMP from IMP. This Lacticaseibacillus paracasei (strain ATCC 334 / BCRC 17002 / CCUG 31169 / CIP 107868 / KCTC 3260 / NRRL B-441) (Lactobacillus paracasei) protein is Adenylosuccinate synthetase.